Reading from the N-terminus, the 265-residue chain is Phosphatidylglycerol--prolipoprotein diacylglyceryl transferase (265 aa).

Transmembrane regions (helical) follow at residues Val-17 to Gly-37, Leu-57 to Tyr-77, Ile-89 to Ala-109, Phe-127 to Gly-147, Gln-176 to Ala-196, Leu-201 to Val-218, and Leu-233 to Ala-253. A 1,2-diacyl-sn-glycero-3-phospho-(1'-sn-glycerol) is bound at residue Arg-140.

This sequence belongs to the Lgt family.

The protein localises to the cell inner membrane. The enzyme catalyses L-cysteinyl-[prolipoprotein] + a 1,2-diacyl-sn-glycero-3-phospho-(1'-sn-glycerol) = an S-1,2-diacyl-sn-glyceryl-L-cysteinyl-[prolipoprotein] + sn-glycerol 1-phosphate + H(+). It functions in the pathway protein modification; lipoprotein biosynthesis (diacylglyceryl transfer). Catalyzes the transfer of the diacylglyceryl group from phosphatidylglycerol to the sulfhydryl group of the N-terminal cysteine of a prolipoprotein, the first step in the formation of mature lipoproteins. The sequence is that of Phosphatidylglycerol--prolipoprotein diacylglyceryl transferase from Azoarcus sp. (strain BH72).